Reading from the N-terminus, the 949-residue chain is Translation initiation factor IF-2 (949 aa).

2 disordered regions span residues 50–206 (FTEK…GAAR) and 220–359 (QNAE…TERK). Basic and acidic residues-rich tracts occupy residues 52–84 (EKPK…KVEK) and 104–143 (FKAE…DQGS). Composition is skewed to polar residues over residues 144–154 (KNRNFNKSQGQ) and 164–180 (GSQQ…SNKP). Over residues 187–206 (NAANRNQNNSQQERQVGAAR) the composition is skewed to low complexity. Basic and acidic residues predominate over residues 224–275 (YMRHKETQLREQEEARRLAERAKEEARLAAQKAAEEKAKEAEKAAKTERFEP). Residues 319-336 (KSWNNQNQVRNQRNSNWN) show a composition bias toward low complexity. The tr-type G domain occupies 450-619 (ERAPVVTIMG…LLVAEVEELK (170 aa)). The segment at 459–466 (GHVDHGKT) is G1. 459-466 (GHVDHGKT) is a binding site for GTP. The G2 stretch occupies residues 484–488 (GITQH). The segment at 505–508 (DTPG) is G3. GTP-binding positions include 505–509 (DTPGH) and 559–562 (NKID). A G4 region spans residues 559 to 562 (NKID). The segment at 595–597 (SAK) is G5.

The protein belongs to the TRAFAC class translation factor GTPase superfamily. Classic translation factor GTPase family. IF-2 subfamily.

The protein resides in the cytoplasm. Its function is as follows. One of the essential components for the initiation of protein synthesis. Protects formylmethionyl-tRNA from spontaneous hydrolysis and promotes its binding to the 30S ribosomal subunits. Also involved in the hydrolysis of GTP during the formation of the 70S ribosomal complex. This is Translation initiation factor IF-2 from Streptococcus uberis (strain ATCC BAA-854 / 0140J).